The primary structure comprises 434 residues: Probable glucuronosyltransferase Os02g0520750 (434 aa).

The Cytoplasmic segment spans residues 1 to 10; sequence MVGARAGRVP. A helical; Signal-anchor for type II membrane protein transmembrane segment spans residues 11 to 31; sequence AAAAAAAAVLIVAACVFSSLA. Residues 32 to 434 are Lumenal-facing; it reads GAAAAAEVVG…GPVADLKPWK (403 aa). Residues Asn160 and Asn421 are each glycosylated (N-linked (GlcNAc...) asparagine).

The protein belongs to the glycosyltransferase 47 family.

It is found in the golgi apparatus membrane. Involved in the synthesis of glucuronoxylan hemicellulose in secondary cell walls. The polypeptide is Probable glucuronosyltransferase Os02g0520750 (Oryza sativa subsp. japonica (Rice)).